A 260-amino-acid polypeptide reads, in one-letter code: Carbonic anhydrase 2 (260 aa).

Ser2 bears the N-acetylserine mark. Ser2 carries the post-translational modification Phosphoserine. Residues 3–259 (HHWGYGKHNG…LKGRQVKASF (257 aa)) form the Alpha-carbonic anhydrase domain. The active-site Proton donor/acceptor is the His64. Positions 94, 96, and 119 each coordinate Zn(2+). Phosphoserine occurs at positions 165 and 172. Residue 198 to 199 (TT) participates in substrate binding.

The protein belongs to the alpha-carbonic anhydrase family. As to quaternary structure, interacts with SLC4A4 and SLC26A6. Interaction with SLC4A7 regulates SLC4A7 transporter activity. Zn(2+) serves as cofactor.

It is found in the cytoplasm. It localises to the cell membrane. It carries out the reaction hydrogencarbonate + H(+) = CO2 + H2O. The enzyme catalyses urea = cyanamide + H2O. Its activity is regulated as follows. Inhibited by acetazolamide. In terms of biological role, catalyzes the reversible hydration of carbon dioxide. Can also hydrate cyanamide to urea. Involved in the regulation of fluid secretion into the anterior chamber of the eye. Essential for bone resorption and osteoclast differentiation. Contributes to intracellular pH regulation in the duodenal upper villous epithelium during proton-coupled peptide absorption. Stimulates the chloride-bicarbonate exchange activity of SLC26A6. The sequence is that of Carbonic anhydrase 2 (CA2) from Oryctolagus cuniculus (Rabbit).